Consider the following 205-residue polypeptide: UPF0301 protein Bind_0718 (205 aa).

Belongs to the UPF0301 (AlgH) family.

The sequence is that of UPF0301 protein Bind_0718 from Beijerinckia indica subsp. indica (strain ATCC 9039 / DSM 1715 / NCIMB 8712).